We begin with the raw amino-acid sequence, 319 residues long: High mobility group B protein 10 (319 aa).

Residues 1–13 (MSTDISPPYSQTH) show a composition bias toward polar residues. Residues 1 to 25 (MSTDISPPYSQTHVEPVNGYPSDNK) form a disordered region. Residues 40–131 (VRNSALFWEK…FLFQLEHVYY (92 aa)) enclose the ARID domain. Positions 203–220 (PSQSQQTMETPSAIVQSS) are enriched in polar residues. The segment at 203-230 (PSQSQQTMETPSAIVQSSQRRHRKKSKL) is disordered. Residues 238–305 (PKCHRSGYNF…RYRIEMLEYK (68 aa)) constitute a DNA-binding region (HMG box).

As to expression, ubiquitously expressed.

It is found in the nucleus. Functionally, binds preferentially DNA with A/T-rich content. This chain is High mobility group B protein 10 (HMGB10), found in Arabidopsis thaliana (Mouse-ear cress).